Consider the following 260-residue polypeptide: 3'-5' ssDNA/RNA exonuclease TatD (260 aa).

Residues Glu91, His127, and His152 each contribute to the a divalent metal cation site.

Belongs to the metallo-dependent hydrolases superfamily. TatD-type hydrolase family. TatD subfamily. In terms of assembly, monomer. The cofactor is Mg(2+).

It is found in the cytoplasm. Its function is as follows. 3'-5' exonuclease that prefers single-stranded DNA and RNA. May play a role in the H(2)O(2)-induced DNA damage repair. The polypeptide is 3'-5' ssDNA/RNA exonuclease TatD (Salmonella typhimurium (strain LT2 / SGSC1412 / ATCC 700720)).